The chain runs to 423 residues: Glutamate-1-semialdehyde 2,1-aminomutase (423 aa).

Residue K262 is modified to N6-(pyridoxal phosphate)lysine.

It belongs to the class-III pyridoxal-phosphate-dependent aminotransferase family. HemL subfamily. Pyridoxal 5'-phosphate is required as a cofactor.

It localises to the cytoplasm. The catalysed reaction is (S)-4-amino-5-oxopentanoate = 5-aminolevulinate. It participates in porphyrin-containing compound metabolism; protoporphyrin-IX biosynthesis; 5-aminolevulinate from L-glutamyl-tRNA(Glu): step 2/2. The sequence is that of Glutamate-1-semialdehyde 2,1-aminomutase from Methanosphaera stadtmanae (strain ATCC 43021 / DSM 3091 / JCM 11832 / MCB-3).